An 892-amino-acid chain; its full sequence is Translation initiation factor IF-2 (892 aa).

The span at 165–175 (EEQAELERQKT) shows a compositional bias: basic and acidic residues. Disordered regions lie at residues 165–250 (EEQA…EDDS) and 264–300 (ERARRGSNTRGKGGGSHRGATHRGNENSIRSSGAHGF). The segment covering 208 to 222 (PRAVRPAPAARPSVS) has biased composition (low complexity). The region spanning 391–560 (PRPPVVTIMG…SIQAEVLELK (170 aa)) is the tr-type G domain. GTP-binding positions include 400 to 407 (GHVDHGKT), 446 to 450 (DTPGH), and 500 to 503 (SKID).

The protein belongs to the TRAFAC class translation factor GTPase superfamily. Classic translation factor GTPase family. IF-2 subfamily.

The protein localises to the cytoplasm. Functionally, one of the essential components for the initiation of protein synthesis. Protects formylmethionyl-tRNA from spontaneous hydrolysis and promotes its binding to the 30S ribosomal subunits. Also involved in the hydrolysis of GTP during the formation of the 70S ribosomal complex. The chain is Translation initiation factor IF-2 from Xylella fastidiosa (strain 9a5c).